The following is a 1124-amino-acid chain: Sodium/hydrogen exchanger 11 (1124 aa).

11 helical membrane-spanning segments follow: residues L25–L45, C52–Y72, F90–F110, V120–I140, I179–F199, D224–A244, I254–S274, I305–G325, I335–L355, G372–V392, and M405–M425. N-linked (GlcNAc...) asparagine glycans are attached at residues N447 and N473. Helical transmembrane passes span T612–A632, I641–I661, L674–L694, and V706–I726. Residues S642–I723 form an ion transport-like region. I867–L999 lines the a nucleoside 3',5'-cyclic phosphate pocket.

The protein belongs to the monovalent cation:proton antiporter 1 (CPA1) transporter (TC 2.A.36) family.

It is found in the membrane. Functionally, involved in pH regulation. In Homo sapiens (Human), this protein is Sodium/hydrogen exchanger 11 (SLC9C2).